The chain runs to 127 residues: UPF0716 protein YtzA (127 aa).

4 helical membrane-spanning segments follow: residues 3–22, 26–46, 70–90, and 93–115; these read FLFL…FLFL, IGIL…AAAA, AIAD…PGFL, and LAGA…FKWL.

This sequence belongs to the UPF0716 (FxsA) family.

The protein localises to the cell membrane. This Bacillus subtilis (strain 168) protein is UPF0716 protein YtzA (ytzA).